The sequence spans 187 residues: Peptide deformylase (187 aa).

The Fe cation site is built by Cys-114 and His-157. Residue Glu-158 is part of the active site. His-161 is a Fe cation binding site.

Belongs to the polypeptide deformylase family. Fe(2+) is required as a cofactor.

It carries out the reaction N-terminal N-formyl-L-methionyl-[peptide] + H2O = N-terminal L-methionyl-[peptide] + formate. Functionally, removes the formyl group from the N-terminal Met of newly synthesized proteins. Requires at least a dipeptide for an efficient rate of reaction. N-terminal L-methionine is a prerequisite for activity but the enzyme has broad specificity at other positions. This Enterococcus faecalis (strain ATCC 700802 / V583) protein is Peptide deformylase.